The sequence spans 98 residues: Large ribosomal subunit protein uL23 (98 aa).

This sequence belongs to the universal ribosomal protein uL23 family. In terms of assembly, part of the 50S ribosomal subunit. Contacts protein L29, and trigger factor when it is bound to the ribosome.

One of the early assembly proteins it binds 23S rRNA. One of the proteins that surrounds the polypeptide exit tunnel on the outside of the ribosome. Forms the main docking site for trigger factor binding to the ribosome. The polypeptide is Large ribosomal subunit protein uL23 (Borrelia garinii subsp. bavariensis (strain ATCC BAA-2496 / DSM 23469 / PBi) (Borreliella bavariensis)).